A 336-amino-acid chain; its full sequence is CASP-like protein UU1 (336 aa).

Residues 1 to 170 (MGKGPGLDPS…PAMESNKDDN (170 aa)) are Cytoplasmic-facing. Residues 171–191 (FFGAIVLSLRAAQIVFTVVGL) traverse the membrane as a helical segment. The Extracellular portion of the chain corresponds to 192–222 (GVMGSLKHTSHGDYYYYYYDFSFTQVDSYIG). Residues 223-243 (VLSLDVIVCLYAIVQLVLCFI) traverse the membrane as a helical segment. Residues 244–261 (QRSNQGKYLSSPTTVAAK) are Cytoplasmic-facing. The helical transmembrane segment at 262–282 (LTFVFDQVLAYALVATAGAAA) threads the bilayer. The Extracellular segment spans residues 283 to 307 (GSALEIRKGTSCSGTWTVICSKGEA). The chain crosses the membrane as a helical span at residues 308-328 (SVAMSFFAFAFLAATAAVYSV). Topologically, residues 329 to 336 (RLLRITGR) are cytoplasmic.

Belongs to the Casparian strip membrane proteins (CASP) family. Homodimer and heterodimers.

It is found in the cell membrane. In Physcomitrium patens (Spreading-leaved earth moss), this protein is CASP-like protein UU1.